The sequence spans 404 residues: Proteasomal ubiquitin receptor ADRM1-B (404 aa).

Positions 17-130 (SSSKYLVEFR…RKVNEYLNNP (114 aa)) constitute a Pru domain. 3 disordered regions span residues 128 to 149 (NNPP…LSAL), 195 to 258 (GSGG…TSPT), and 376 to 404 (FAKA…MSLD). The span at 195–247 (GSGGPTTSSSSSSSRSQSAAVTPSSTTSSTRTTSAPVAPAAAPATTPSPAVSS) shows a compositional bias: low complexity. The span at 248–258 (NDGASAATSPT) shows a compositional bias: polar residues. The DEUBAD domain maps to 278–390 (TGEGGQQVDL…QSTSSQKERE (113 aa)). Residues 386 to 395 (QKERESSEKK) show a composition bias toward basic and acidic residues.

This sequence belongs to the ADRM1 family. As to quaternary structure, component of the 19S proteasome regulatory particle complex. The 26S proteasome consists of a 20S core particle (CP) and two 19S regulatory subunits (RP).

The protein resides in the cytoplasm. It is found in the nucleus. Functionally, component of the 26S proteasome, a multiprotein complex involved in the ATP-dependent degradation of ubiquitinated proteins. This complex plays a key role in the maintenance of protein homeostasis by removing misfolded or damaged proteins, which could impair cellular functions, and by removing proteins whose functions are no longer required. Therefore, the proteasome participates in numerous cellular processes, including cell cycle progression, apoptosis, or DNA damage repair. Within the complex, functions as a proteasomal ubiquitin receptor. The polypeptide is Proteasomal ubiquitin receptor ADRM1-B (adrm1-b) (Xenopus laevis (African clawed frog)).